Here is a 495-residue protein sequence, read N- to C-terminus: Protein adenylyltransferase Fic (495 aa).

The interval 1 to 27 is disordered; that stretch reads MGTEAEQPSPPSPPAQQQEQTNPPLWN. A helical transmembrane segment spans residues 36–55; it reads LYRLVLFFIAGSLAAWTIHA. TPR repeat units follow at residues 121–154 and 155–189; these read ALVSLRMAQDMYLAGKDDKASRLFEHALALAPRH and PEVLLRYGEFLEHSQRNIVLADQYYFQALTISPSN. The Inhibitory (S/T)XXXE(G/N) motif motif lies at 246 to 251; the sequence is SVGIEG. ATP is bound by residues Glu-250 and 331–334; that span reads VGGH. The 136-residue stretch at 300–435 folds into the Fido domain; that stretch reads ITIKDILELH…IRPFVRFIAD (136 aa). Residue His-378 is part of the active site. ATP-binding positions include 382–389, 414–415, and Asn-422; these read DGNGRTSR and YY.

It belongs to the fic family. As to quaternary structure, homodimer.

It localises to the membrane. It catalyses the reaction L-tyrosyl-[protein] + ATP = O-(5'-adenylyl)-L-tyrosyl-[protein] + diphosphate. The catalysed reaction is L-threonyl-[protein] + ATP = 3-O-(5'-adenylyl)-L-threonyl-[protein] + diphosphate. It carries out the reaction 3-O-(5'-adenylyl)-L-threonyl-[protein] + H2O = L-threonyl-[protein] + AMP + H(+). Its activity is regulated as follows. The side chain of Glu-250 determines which of the two opposing activities (AMPylase or de-AMPylase) will take place. In response to endoplasmic reticulum stress, mediates de-AMPylase activity. Adenylyltransferase activity is inhibited by the inhibitory helix present at the N-terminus: Glu-250 binds ATP and competes with ATP-binding at Arg-389, thereby preventing adenylyltransferase activity. In unstressed cells, disengagement of Glu-250 promotes adenylyltransferase activity. Activation dissociates ATP-binding from Glu-250, allowing ordered binding of the entire ATP moiety with the alpha-phosphate in an orientation that is productive for accepting an incoming target hydroxyl side chain. Functionally, protein that can both mediate the addition of adenosine 5'-monophosphate (AMP) to specific residues of target proteins (AMPylation), and the removal of the same modification from target proteins (de-AMPylation), depending on the context. The side chain of Glu-250 determines which of the two opposing activities (AMPylase or de-AMPylase) will take place. Acts as a key regulator of the unfolded protein response (UPR) by mediating AMPylation or de-AMPylation of Hsc70-3/BiP. In unstressed cells, acts as an adenylyltransferase by mediating AMPylation of Hsc70-3/BiP at 'Thr-518', thereby inactivating it. In response to endoplasmic reticulum stress, acts as a phosphodiesterase by mediating removal of ATP (de-AMPylation) from Hsc70-3/BiP at 'Thr-518', leading to restore HSPA5/BiP activity. This is Protein adenylyltransferase Fic from Drosophila yakuba (Fruit fly).